The chain runs to 212 residues: Large ribosomal subunit protein uL3 (212 aa).

Positions 131–155 (RGNMTHGSKNHRLPGSTGAGTTPGR) are disordered.

Belongs to the universal ribosomal protein uL3 family. In terms of assembly, part of the 50S ribosomal subunit. Forms a cluster with proteins L14 and L19.

Its function is as follows. One of the primary rRNA binding proteins, it binds directly near the 3'-end of the 23S rRNA, where it nucleates assembly of the 50S subunit. The polypeptide is Large ribosomal subunit protein uL3 (Microcystis aeruginosa (strain NIES-843 / IAM M-2473)).